Reading from the N-terminus, the 80-residue chain is Serine protease inhibitor Kazal-type 6 (80 aa).

Residues 1–23 (MKLSGMFLLLSLALFCFLTGVFS) form the signal peptide. Position 24 is a pyrrolidone carboxylic acid (Gln24). Residues 24–80 (QGGQVDCGEFQDPKVYCTRESNPHCGSDGQTYGNKCAFCKAIVKSGGKISLKHPGKC) form the Kazal-like domain. 3 disulfides stabilise this stretch: Cys30–Cys62, Cys40–Cys59, and Cys48–Cys80.

It is found in the secreted. Its function is as follows. Serine protease inhibitor selective for kallikreins. Efficiently inhibits KLK4, KLK5, KLK6, KLK7, KLK12, KLK13 and KLK14. Doesn't inhibit KLK8. The polypeptide is Serine protease inhibitor Kazal-type 6 (SPINK6) (Homo sapiens (Human)).